Here is a 363-residue protein sequence, read N- to C-terminus: Phosphoserine aminotransferase (363 aa).

R42 contacts L-glutamate. Pyridoxal 5'-phosphate is bound by residues 76 to 77 (GR), W102, T156, D175, and Q198. K199 is subject to N6-(pyridoxal phosphate)lysine. Residue 240–241 (NT) coordinates pyridoxal 5'-phosphate.

The protein belongs to the class-V pyridoxal-phosphate-dependent aminotransferase family. SerC subfamily. Homodimer. Pyridoxal 5'-phosphate serves as cofactor.

It localises to the cytoplasm. The catalysed reaction is O-phospho-L-serine + 2-oxoglutarate = 3-phosphooxypyruvate + L-glutamate. The enzyme catalyses 4-(phosphooxy)-L-threonine + 2-oxoglutarate = (R)-3-hydroxy-2-oxo-4-phosphooxybutanoate + L-glutamate. The protein operates within amino-acid biosynthesis; L-serine biosynthesis; L-serine from 3-phospho-D-glycerate: step 2/3. Its pathway is cofactor biosynthesis; pyridoxine 5'-phosphate biosynthesis; pyridoxine 5'-phosphate from D-erythrose 4-phosphate: step 3/5. Its function is as follows. Catalyzes the reversible conversion of 3-phosphohydroxypyruvate to phosphoserine and of 3-hydroxy-2-oxo-4-phosphonooxybutanoate to phosphohydroxythreonine. This chain is Phosphoserine aminotransferase, found in Shewanella piezotolerans (strain WP3 / JCM 13877).